We begin with the raw amino-acid sequence, 504 residues long: Maturase K (504 aa).

This sequence belongs to the intron maturase 2 family. MatK subfamily.

The protein resides in the plastid. Its subcellular location is the chloroplast. Usually encoded in the trnK tRNA gene intron. Probably assists in splicing its own and other chloroplast group II introns. In Draba nemorosa (Woodland whitlowgrass), this protein is Maturase K.